A 103-amino-acid polypeptide reads, in one-letter code: Histone H4 (103 aa).

The segment covering 1 to 14 (MSGRGKGGKGLGKG) has biased composition (gly residues). A disordered region spans residues 1 to 20 (MSGRGKGGKGLGKGGAKRHR). Serine 2 carries the post-translational modification N-acetylserine. Lysine 17 bears the N6-acetyllysine mark. A DNA-binding region spans residues 17–21 (KRHRK). N6-methyllysine is present on lysine 21.

This sequence belongs to the histone H4 family. As to quaternary structure, the nucleosome is a histone octamer containing two molecules each of H2A, H2B, H3 and H4 assembled in one H3-H4 heterotetramer and two H2A-H2B heterodimers. The octamer wraps approximately 147 bp of DNA.

It localises to the nucleus. It is found in the chromosome. Core component of nucleosome. Nucleosomes wrap and compact DNA into chromatin, limiting DNA accessibility to the cellular machineries which require DNA as a template. Histones thereby play a central role in transcription regulation, DNA repair, DNA replication and chromosomal stability. DNA accessibility is regulated via a complex set of post-translational modifications of histones, also called histone code, and nucleosome remodeling. This is Histone H4 from Capsicum annuum (Capsicum pepper).